We begin with the raw amino-acid sequence, 202 residues long: Transmembrane 4 L6 family member 4 (202 aa).

Residues 1-9 (MCTGGCARC) lie on the Cytoplasmic side of the membrane. Residues 10–30 (LGGTLIPLAFFGFLANILLFF) form a helical membrane-spanning segment. The Extracellular portion of the chain corresponds to 31 to 45 (PGGKVIDDNDHLSQE). Residues 46 to 66 (IWFFGGILGSGVLMIFPALVF) traverse the membrane as a helical segment. The Cytoplasmic portion of the chain corresponds to 67–93 (LGLKNNDCCGCCGNEGCGKRFAMFTST). A helical membrane pass occupies residues 94–114 (IFAVVGFLGAGYSFIISAISI). Over 115–158 (NKGPKCLMANSTWGYPFHDGDYLNDEALWNKCREPLNVVPWNLT) the chain is Extracellular. Asn124 and Asn156 each carry an N-linked (GlcNAc...) asparagine glycan. The chain crosses the membrane as a helical span at residues 159–179 (LFSILLVVGGIQMVLCAIQVV). The Cytoplasmic segment spans residues 180–202 (NGLLGTLCGDCQCCGCCGGDGPV).

Belongs to the L6 tetraspanin family. N-glycosylated. Glycosylation is required for the growth inhibitory effect. Jejunum and liver.

It is found in the membrane. Regulates the adhesive and proliferative status of intestinal epithelial cells. Can mediate density-dependent cell proliferation. The polypeptide is Transmembrane 4 L6 family member 4 (TM4SF4) (Homo sapiens (Human)).